Here is a 13041-residue protein sequence, read N- to C-terminus: Nonribosomal peptide synthetase kk1B (13041 aa).

Positions alanine 267–arginine 663 are adenylation 1. Residues alanine 788–serine 864 enclose the Carrier 1 domain. The residue at position 825 (serine 825) is an O-(pantetheine 4'-phosphoryl)serine. The segment at serine 882–aspartate 1313 is condensation 1. The segment at phenylalanine 1341–arginine 1736 is adenylation 2. The 75-residue stretch at alanine 1865 to serine 1939 folds into the Carrier 2 domain. Position 1899 is an O-(pantetheine 4'-phosphoryl)serine (serine 1899). The segment at serine 1957–leucine 2383 is condensation 2. Residues glutamine 2418–arginine 2812 are adenylation 3. The segment at valine 2891–leucine 3023 is methyltransferase (M) domain 1. Residues glycine 3353–serine 3427 enclose the Carrier 3 domain. An O-(pantetheine 4'-phosphoryl)serine modification is found at serine 3387. Residues serine 3445–leucine 3869 are condensation 3. The interval phenylalanine 3901–arginine 4300 is adenylation 4. The Carrier 4 domain occupies proline 4412–serine 4486. Position 4446 is an O-(pantetheine 4'-phosphoryl)serine (serine 4446). A condensation 4 region spans residues serine 4504–aspartate 4935. The tract at residues phenylalanine 4963–arginine 5362 is adenylation 5. Residues threonine 5430–tyrosine 5567 form a methyltransferase (M) domain 2 region. The 75-residue stretch at glutamine 5897–serine 5971 folds into the Carrier 5 domain. Serine 5931 is subject to O-(pantetheine 4'-phosphoryl)serine. Residues serine 5989–leucine 6416 form a condensation 5 region. The adenylation 6 stretch occupies residues glutamine 6451–arginine 6845. The interval valine 6924 to leucine 7056 is methyltransferase (M) domain 3. One can recognise a Carrier 6 domain in the interval glycine 7386–serine 7460. Serine 7420 bears the O-(pantetheine 4'-phosphoryl)serine mark. Positions serine 7478 to serine 7901 are condensation 6. Positions phenylalanine 7934–arginine 8335 are adenylation 7. The interval tyrosine 8404–leucine 8540 is methyltransferase (M) domain 4. The Carrier 7 domain maps to glycine 8871 to serine 8945. An O-(pantetheine 4'-phosphoryl)serine modification is found at serine 8905. Residues serine 8963–leucine 9392 are condensation 7. An adenylation 8 region spans residues phenylalanine 9422 to arginine 9822. The 75-residue stretch at proline 9943 to serine 10017 folds into the Carrier 8 domain. The residue at position 9977 (serine 9977) is an O-(pantetheine 4'-phosphoryl)serine. The segment at serine 10035–leucine 10462 is condensation 8. Residues phenylalanine 10494–arginine 10892 are adenylation 9. A methyltransferase (M) domain 5 region spans residues isoleucine 10959–leucine 11105. In terms of domain architecture, Carrier 9 spans serine 11428–serine 11502. Serine 11462 is modified (O-(pantetheine 4'-phosphoryl)serine). A condensation 9 region spans residues serine 11520–leucine 11945. Residues phenylalanine 11977–arginine 12377 are adenylation 10. One can recognise a Carrier 10 domain in the interval valine 12495 to isoleucine 12569. An O-(pantetheine 4'-phosphoryl)serine modification is found at serine 12529. Positions phenylalanine 12647–isoleucine 13032 are condensation 10.

This sequence belongs to the NRP synthetase family.

Its pathway is secondary metabolite biosynthesis. Its function is as follows. Nonribosomal peptide synthetase; part of the gene cluster that mediates the biosynthesis of KK-1, a novel cyclic depsipeptide with 10 residues which is a promising active compound with high activity against many plant pathogens, especially Botrytis cinerea. The nonribosomal peptide synthetase (NRPS) kk1B catalyzes the elongation and cyclization of the decapeptide chain composed of 1 D-lactic acid residue (D-Lac), 1 pipecolic acid residue (Pip), 1 aspartic acid residue (Asp), 1 isoleucine residue (Ile), 1 glycine residue (Gly), 1 tyrosine residue (Tyr) and 4 valine residues (Val). The Asp, Ile and 3 Val residues are N-methylated by the 5 methyltransferase domains from the NRPS (found in modules 3, 5, 6, 7 and 9), whereas the Tyr residue is O-methylated by the cluster encoded O-methyltransferase kk1A. Cyclization with the hydroxy group of the D-lactic acid as a nucleophile is presumed to occur in the final module of NRPS, resulting in the formation of the depsipeptide ester bond through macrocyclization by the C-terminal C domain. The thioesterase kk1J is likely to be involved in the corrective mechanism of peptide chain synthesis. The D-lactate dehydrogenase kk1H is involved in the synthesis of D-lactic acid from pyruvic acid, which is recognized by the A domain of the first kk1B module. The pyrroline-5-carboxylate reductase kk1I is involved in the synthesis of the L-pipecolic acid residue of KK-1 from delta-1-pyrroline-5-carboxylate (P5C), a metabolic intermediate of lysine. It is still unclear how kk1C and kk1D are involved in the production of KK-1. The protein is Nonribosomal peptide synthetase kk1B of Curvularia clavata.